A 75-amino-acid chain; its full sequence is Endogenous retrovirus group K member 10 Np9 protein (75 aa).

The tract at residues 21–43 (PTAPKRQRPSRTGHDDDGGFVEK) is disordered. Positions 32–43 (TGHDDDGGFVEK) are enriched in basic and acidic residues.

It localises to the nucleus. In terms of biological role, may possess a function in tumorigenesis. This chain is Endogenous retrovirus group K member 10 Np9 protein (ERVK-10), found in Homo sapiens (Human).